The following is a 304-amino-acid chain: E3 ubiquitin-protein ligase BOI (304 aa).

A WRD domain region spans residues 178 to 214 (LQERVKSLYVENQIWRDIAQTNEANANTLRTNLDQVL). Residues 197–220 (QTNEANANTLRTNLDQVLAQLETF) adopt a coiled-coil conformation. The segment at 254–291 (CKRCGEREASVLVLPCRHLCLCTVCGGSALLRTCPVCD) adopts an RING-type zinc-finger fold.

As to quaternary structure, interacts with MYB108/BOS1 and the DELLA proteins GAI, RGA, RGL1, RGL2 and RGL3. Expressed in leaves, siliques, roots, flowering tissues and stigma tips.

It is found in the nucleus. The catalysed reaction is S-ubiquitinyl-[E2 ubiquitin-conjugating enzyme]-L-cysteine + [acceptor protein]-L-lysine = [E2 ubiquitin-conjugating enzyme]-L-cysteine + N(6)-ubiquitinyl-[acceptor protein]-L-lysine.. It functions in the pathway protein degradation; proteasomal ubiquitin-dependent pathway. Its function is as follows. E3 ubiquitin-protein ligase involved in the regulation of pathogen and abiotic stress responses by facilitating degradation of MYB108/BOI. Attenuates cell death by preventing caspase activation. Has no effect on the stability of the DELLA proteins. Not regulated by MYB108/BOI. The sequence is that of E3 ubiquitin-protein ligase BOI (BOI) from Arabidopsis thaliana (Mouse-ear cress).